A 272-amino-acid polypeptide reads, in one-letter code: Putative phosphatase HI_0597 (272 aa).

Catalysis depends on Asp11, which acts as the Nucleophile. Asp11 is a Mg(2+) binding site. Leu12 serves as a coordination point for phosphate. Mg(2+) is bound at residue Asp13. Residues 45–46 and Lys195 contribute to the phosphate site; that span reads TG. Asp218 contributes to the Mg(2+) binding site. Asn221 is a binding site for phosphate.

It belongs to the HAD-like hydrolase superfamily. Cof family. Requires Mg(2+) as cofactor.

This is Putative phosphatase HI_0597 from Haemophilus influenzae (strain ATCC 51907 / DSM 11121 / KW20 / Rd).